We begin with the raw amino-acid sequence, 197 residues long: Dephospho-CoA kinase (197 aa).

The DPCK domain occupies 2-197 (IIGITGGIAS…SALLSLANPR (196 aa)). 10 to 15 (ASGKST) contacts ATP.

Belongs to the CoaE family.

It is found in the cytoplasm. The catalysed reaction is 3'-dephospho-CoA + ATP = ADP + CoA + H(+). The protein operates within cofactor biosynthesis; coenzyme A biosynthesis; CoA from (R)-pantothenate: step 5/5. Catalyzes the phosphorylation of the 3'-hydroxyl group of dephosphocoenzyme A to form coenzyme A. This Streptococcus pyogenes serotype M3 (strain ATCC BAA-595 / MGAS315) protein is Dephospho-CoA kinase.